The primary structure comprises 266 residues: Undecaprenyl-diphosphatase (266 aa).

The next 8 membrane-spanning stretches (helical) occupy residues 1–21 (MDTF…FLPI), 39–59 (QGLA…VLYF), 83–103 (SKLA…GFAL), 111–131 (LRGP…LWWA), 144–164 (TGWK…IPGT), 183–203 (AAAR…AILM), 218–238 (SLAL…HLFL), and 246–266 (MTPF…FIFM).

It belongs to the UppP family.

The protein localises to the cell inner membrane. The catalysed reaction is di-trans,octa-cis-undecaprenyl diphosphate + H2O = di-trans,octa-cis-undecaprenyl phosphate + phosphate + H(+). Its function is as follows. Catalyzes the dephosphorylation of undecaprenyl diphosphate (UPP). Confers resistance to bacitracin. The sequence is that of Undecaprenyl-diphosphatase from Shewanella woodyi (strain ATCC 51908 / MS32).